The following is a 408-amino-acid chain: MKRTLRNPGNSSTVGDVHDVFFEYDVSNVGRKRPRTKEEGYYESESEEDEDQILNKEKKEGQSEDMFSDTSEDEKRTLPNDEAQKRRDFIENGDAERLAHKGLRNKEVLNDDSDDEDDNGKYSKLRYEDIEGQEDTNQANDLDADEEGSEISVPSSPKRMSFNLKEDMEEGDFDENGNFIRKNYDPESQYDAWLNGSVSNKKSIAAAREAEQKRKEMENRRRNQELEEFSKLPFSTVPEALSFFIARMERDESILEFLQRQSGNKKSYKKKKNNTAEGISPERKSADAFRKKLIELITAGLTFLEDKIGKEDIYSETRESLQRIYQKLTSNSWSSPVSYDDSNSSQYNFKWEFDDKTYGPYTASQIQAWSNEGYFTDAKHAAFIQLANMDEWMYPNNICFCDVVSLKK.

The tract at residues 1–161 (MKRTLRNPGN…SVPSSPKRMS (161 aa)) is disordered. Residues 41–52 (YYESESEEDEDQ) show a composition bias toward acidic residues. Composition is skewed to basic and acidic residues over residues 53-62 (ILNKEKKEGQ), 73-109 (DEKRTLPNDEAQKRRDFIENGDAERLAHKGLRNKEVL), and 119-129 (NGKYSKLRYED). Positions 344-402 (SSQYNFKWEFDDKTYGPYTASQIQAWSNEGYFTDAKHAAFIQLANMDEWMYPNNICFCD) constitute a GYF domain.

The protein belongs to the LIN1 family.

The polypeptide is LIN1-like protein (Schizosaccharomyces pombe (strain 972 / ATCC 24843) (Fission yeast)).